A 464-amino-acid chain; its full sequence is 3-isopropylmalate dehydratase large subunit (464 aa).

Residues Cys-337, Cys-397, and Cys-400 each contribute to the [4Fe-4S] cluster site.

The protein belongs to the aconitase/IPM isomerase family. LeuC type 1 subfamily. In terms of assembly, heterodimer of LeuC and LeuD. [4Fe-4S] cluster is required as a cofactor.

It carries out the reaction (2R,3S)-3-isopropylmalate = (2S)-2-isopropylmalate. It participates in amino-acid biosynthesis; L-leucine biosynthesis; L-leucine from 3-methyl-2-oxobutanoate: step 2/4. Its function is as follows. Catalyzes the isomerization between 2-isopropylmalate and 3-isopropylmalate, via the formation of 2-isopropylmaleate. The chain is 3-isopropylmalate dehydratase large subunit from Bacillus cereus (strain B4264).